A 341-amino-acid chain; its full sequence is Phosphoribosylformylglycinamidine cyclo-ligase (341 aa).

This sequence belongs to the AIR synthase family.

It is found in the cytoplasm. The enzyme catalyses 2-formamido-N(1)-(5-O-phospho-beta-D-ribosyl)acetamidine + ATP = 5-amino-1-(5-phospho-beta-D-ribosyl)imidazole + ADP + phosphate + H(+). The protein operates within purine metabolism; IMP biosynthesis via de novo pathway; 5-amino-1-(5-phospho-D-ribosyl)imidazole from N(2)-formyl-N(1)-(5-phospho-D-ribosyl)glycinamide: step 2/2. The protein is Phosphoribosylformylglycinamidine cyclo-ligase of Caldicellulosiruptor saccharolyticus (strain ATCC 43494 / DSM 8903 / Tp8T 6331).